The sequence spans 434 residues: Glutamyl-tRNA reductase (434 aa).

Substrate is bound by residues 54–57, Ser113, 118–120, and Gln124; these read TCNR and EAQ. The Nucleophile role is filled by Cys55. NADP(+) is bound at residue 193–198; it reads GGGEVS.

This sequence belongs to the glutamyl-tRNA reductase family. As to quaternary structure, homodimer.

It catalyses the reaction (S)-4-amino-5-oxopentanoate + tRNA(Glu) + NADP(+) = L-glutamyl-tRNA(Glu) + NADPH + H(+). Its pathway is porphyrin-containing compound metabolism; protoporphyrin-IX biosynthesis; 5-aminolevulinate from L-glutamyl-tRNA(Glu): step 1/2. It participates in porphyrin-containing compound metabolism; chlorophyll biosynthesis. Functionally, catalyzes the NADPH-dependent reduction of glutamyl-tRNA(Glu) to glutamate 1-semialdehyde (GSA). The chain is Glutamyl-tRNA reductase from Chloroflexus aurantiacus (strain ATCC 29366 / DSM 635 / J-10-fl).